Here is a 130-residue protein sequence, read N- to C-terminus: Small ribosomal subunit protein uS8 (130 aa).

It belongs to the universal ribosomal protein uS8 family. In terms of assembly, part of the 30S ribosomal subunit. Contacts proteins S5 and S12.

Functionally, one of the primary rRNA binding proteins, it binds directly to 16S rRNA central domain where it helps coordinate assembly of the platform of the 30S subunit. This is Small ribosomal subunit protein uS8 from Buchnera aphidicola subsp. Cinara cedri (strain Cc).